The primary structure comprises 231 residues: LexA repressor (231 aa).

Residues 31-51 (RAEIATEFGFRSANAAEEHLQ) constitute a DNA-binding region (H-T-H motif). Residues serine 148 and lysine 185 each act as for autocatalytic cleavage activity in the active site.

This sequence belongs to the peptidase S24 family. Homodimer.

The enzyme catalyses Hydrolysis of Ala-|-Gly bond in repressor LexA.. Functionally, represses a number of genes involved in the response to DNA damage (SOS response), including recA and lexA. In the presence of single-stranded DNA, RecA interacts with LexA causing an autocatalytic cleavage which disrupts the DNA-binding part of LexA, leading to derepression of the SOS regulon and eventually DNA repair. The protein is LexA repressor of Leptothrix cholodnii (strain ATCC 51168 / LMG 8142 / SP-6) (Leptothrix discophora (strain SP-6)).